The following is a 276-amino-acid chain: Mitochondrial outer membrane protein porin 6 (276 aa).

Belongs to the eukaryotic mitochondrial porin (TC 1.B.8.1) family.

Its subcellular location is the mitochondrion outer membrane. Its function is as follows. Forms a channel through the mitochondrial outer membrane that allows diffusion of small hydrophilic molecules. The channel adopts an open conformation at low or zero membrane potential and a closed conformation at potentials above 30-40 mV. The open state has a weak anion selectivity whereas the closed state is cation-selective. The polypeptide is Mitochondrial outer membrane protein porin 6 (VDAC6) (Oryza sativa subsp. japonica (Rice)).